A 207-amino-acid polypeptide reads, in one-letter code: Small ribosomal subunit protein uS2 (207 aa).

The protein belongs to the universal ribosomal protein uS2 family.

The polypeptide is Small ribosomal subunit protein uS2 (Nitrosopumilus maritimus (strain SCM1)).